The sequence spans 261 residues: Thioesterase frbD (261 aa).

Belongs to the AMT4 thioesterase family.

It functions in the pathway antifungal biosynthesis. Its function is as follows. Thioesterase; part of the gene cluster that mediates the biosynthesis of the antifungal antibiotic FR901469, an inhibitor of beta-1,3-glucansynthase, exerting antifungal activity against the pathogenes Candida albicans and Aspergillus fumigatus. FR901469 is a cyclic depsipeptide containing 12 amino acid residues and a fatty acid chain. The NRPS frbI contains 12 modules responsible for the formation of the depsipeptide backbone which is denoted as Acyl-Thr-Ala-Tyr-Val-4OHPro-Thr-Thr-3OHPro-threo3OHGln-Gly-Thr-Orn-OH (C71H116N14O23). The PKS frbB is probably involved in the production of the hydrocarbon chain, and the acyl-CoA ligase frbC might be involved in the transport of the chain to the peptide ptoduct of frbI. Because FR901469 contains 3 hydroxylated amino acid residues, the 3 oxygenases frbA, frbH, and frbJ might be participating in amino acid hydroxylation. As no thioesterase domains were detected in frbI or frbB, the thioesterases frbD and frbE may instead release and cyclize the products of the NRPS and PKS, respectively. The sequence is that of Thioesterase frbD from Dothideomycetidae sp. (strain 11243) (Fungal sp. (strain No.11243)).